We begin with the raw amino-acid sequence, 60 residues long: Large ribosomal subunit protein bL33 (60 aa).

Belongs to the bacterial ribosomal protein bL33 family.

In Christiangramia forsetii (strain DSM 17595 / CGMCC 1.15422 / KT0803) (Gramella forsetii), this protein is Large ribosomal subunit protein bL33.